Reading from the N-terminus, the 205-residue chain is Small ribosomal subunit protein uS4 (205 aa).

The S4 RNA-binding domain occupies 110 to 172; it reads RRLQTIIYRK…VGSPITKEKL (63 aa). The tract at residues 173 to 205 is disordered; it reads MAKPQPASAPKAAAAPKAAAAPAEAAAAPKKEE. Residues 174-205 show a composition bias toward low complexity; the sequence is AKPQPASAPKAAAAPKAAAAPAEAAAAPKKEE.

The protein belongs to the universal ribosomal protein uS4 family. As to quaternary structure, part of the 30S ribosomal subunit. Contacts protein S5. The interaction surface between S4 and S5 is involved in control of translational fidelity.

In terms of biological role, one of the primary rRNA binding proteins, it binds directly to 16S rRNA where it nucleates assembly of the body of the 30S subunit. Its function is as follows. With S5 and S12 plays an important role in translational accuracy. In Methanocella arvoryzae (strain DSM 22066 / NBRC 105507 / MRE50), this protein is Small ribosomal subunit protein uS4.